The following is an 81-amino-acid chain: Exodeoxyribonuclease 7 small subunit (81 aa).

Belongs to the XseB family. As to quaternary structure, heterooligomer composed of large and small subunits.

Its subcellular location is the cytoplasm. It carries out the reaction Exonucleolytic cleavage in either 5'- to 3'- or 3'- to 5'-direction to yield nucleoside 5'-phosphates.. Bidirectionally degrades single-stranded DNA into large acid-insoluble oligonucleotides, which are then degraded further into small acid-soluble oligonucleotides. The polypeptide is Exodeoxyribonuclease 7 small subunit (Ruegeria sp. (strain TM1040) (Silicibacter sp.)).